Here is a 436-residue protein sequence, read N- to C-terminus: uncharacterized protein (436 aa).

A helical membrane pass occupies residues 1 to 21 (MILLQVICTIWTCLFIPLLNA). BNR repeat units follow at residues 57 to 68 (WISSDSGENWEA) and 101 to 112 (YVTDDRGKSWRA). N157 is a glycosylation site (N-linked (GlcNAc...) asparagine). BNR repeat units lie at residues 229-240 (ALSTDGGKTFKK) and 394-405 (KISVDNGLTWSN).

Its subcellular location is the membrane. This is an uncharacterized protein from Saccharomyces cerevisiae (strain ATCC 204508 / S288c) (Baker's yeast).